The sequence spans 301 residues: Outer membrane porin G (301 aa).

An N-terminal signal peptide occupies residues 1-21 (MKKLLPCTALVMCAGMACAQA). The next 16 beta stranded transmembrane spans lie at 27 to 35 (WHFNIGAMY), 47 to 57 (MDGLAEPSVYF), 64 to 72 (WRIALAYYQ), 89 to 98 (RPELEVHYQF), 104 to 112 (FSFGLTGGF), 129 to 136 (NMQRWKIA), 149 to 158 (FNGWLSMYKF), 172 to 182 (VETETGLQYTF), 186 to 195 (VALRVNYYLE), 201 to 209 (DDSRNNGEF), 213 to 222 (EIRAYLPLTL), 230 to 238 (YTRIGLDRW), 240 to 248 (NWDWQDDIE), 254 to 265 (FNRVGLFYGYDF), 269 to 279 (LSVSLEYAFEW), and 289 to 300 (KFHYAGVGVNYS).

Monomer.

It is found in the cell outer membrane. Forms channels functionally larger than those of classical porins. Functionally, may act as a regulator of the RCS-phosphorelay signal transduction pathway. The sequence is that of Outer membrane porin G (ompG) from Escherichia coli (strain K12).